A 71-amino-acid polypeptide reads, in one-letter code: Small ribosomal subunit protein eS17 (71 aa).

It belongs to the eukaryotic ribosomal protein eS17 family.

The protein is Small ribosomal subunit protein eS17 of Pyrobaculum arsenaticum (strain DSM 13514 / JCM 11321 / PZ6).